Reading from the N-terminus, the 490-residue chain is Betaine aldehyde dehydrogenase (490 aa).

Serine 26, isoleucine 27, and aspartate 93 together coordinate K(+). Position 150-152 (glycine 150–tryptophan 152) interacts with NAD(+). The active-site Charge relay system is the lysine 162. NAD(+) is bound by residues lysine 176–glutamate 179 and glycine 230–threonine 233. Position 246 (leucine 246) interacts with K(+). The Proton acceptor role is filled by glutamate 252. Positions 254, 286, and 387 each coordinate NAD(+). The Nucleophile role is filled by cysteine 286. Residue cysteine 286 is modified to Cysteine sulfenic acid (-SOH). K(+) is bound by residues lysine 457 and glycine 460. The active-site Charge relay system is glutamate 464.

The protein belongs to the aldehyde dehydrogenase family. Dimer of dimers. K(+) is required as a cofactor.

It catalyses the reaction betaine aldehyde + NAD(+) + H2O = glycine betaine + NADH + 2 H(+). The protein operates within amine and polyamine biosynthesis; betaine biosynthesis via choline pathway; betaine from betaine aldehyde: step 1/1. Its function is as follows. Involved in the biosynthesis of the osmoprotectant glycine betaine. Catalyzes the irreversible oxidation of betaine aldehyde to the corresponding acid. This Acinetobacter baumannii (strain ACICU) protein is Betaine aldehyde dehydrogenase.